A 260-amino-acid chain; its full sequence is Alpha carbonic anhydrase 6 (260 aa).

A signal peptide spans 1-28 (MDANTKTILFFVVFFIDLFSPNILFVYA). Residues 35-260 (PLFTYKQKTE…FVFVFWCMLM (226 aa)) form the Alpha-carbonic anhydrase domain. A disulfide bond links Cys-60 and Cys-215. His-100 functions as the Proton acceptor in the catalytic mechanism. His-126 and His-128 together coordinate Zn(2+). Asn-136 carries N-linked (GlcNAc...) asparagine glycosylation. Residue His-145 participates in Zn(2+) binding. 211-212 (TI) contacts substrate.

It belongs to the alpha-class carbonic anhydrase family. Zn(2+) is required as a cofactor. N-glycosylated.

It localises to the plastid. It is found in the chloroplast stroma. The catalysed reaction is hydrogencarbonate + H(+) = CO2 + H2O. In terms of biological role, reversible hydration of carbon dioxide. In Arabidopsis thaliana (Mouse-ear cress), this protein is Alpha carbonic anhydrase 6 (ACA6).